A 946-amino-acid chain; its full sequence is MFAKFDMLEEEARALVRKVGNAVDPIYGFSTTSCQIYDTAWAAMISKEEHGDKVWLFPESFKYLLEKQGEDGSWERHPRSKTVGVLNTAAACLALLRHVKNPLQLQDIAAQDIELRIQRGLRSLEEQLIAWDDVLDTNHIGVEMIVPALLDYLQAEDENVDFEFESHSLLMQMYKEKMARFSPESLYRARPSSALHNLEALIGKLDFDKVGHHLYNGSMMASPSSTAAFLMHASPWSHEAEAYLRHVFEAGTGKGSGGFPGTYPTTYFELNWVLSTLMKSGFTLSDLECDELSSIANTIAEGFECDHGVIGFAPRAVDVDDTAKGLLTLTLLGMDEGVSPAPMIAMFEAKDHFLTFLGERDPSFTSNCHVLLSLLHRTDLLQYLPQIRKTTTFLCEAWWACDGQIKDKWHLSHLYPTMLMVQAFAEILLKSAEGEPLHDAFDAATLSRVSICVFQACLRTLLAQSQDGSWHGQPEASCYAVLTLAESGRLVLLQALQPQIAAAMEKAADVMQAGRWSCSDHDCDWTSKTAYRVDLVAAAYRLAAMKASSNLTFTVDDNVSKRSNGFQQLVGRTDLFSGVPAWELQASFLESALFVPLLRNHRLDVFDRDDIKVSKDHYLDMIPFTWVGCNNRSRTYVSTSFLFDMMIISMLGYQIDEFFEAEAAPAFAQCIGQLHQVVDKVVDEVIDEVVDKVVGKVVGKVVGKVVDERVDSPTHEAIAICNIEASLRRFVDHVLHHQHVLHASQQEQDILWRELRAFLHAHVVQMADNSTLAPPGRTFFDWVRTTAADHVACAYSFAFACCITSATIGQGQSMFATVNELYLVQAAARHMTTMCRMCNDIGSVDRDFIEANINSVHFPEFSTLSLVADKKKALARLAAYEKSCLTHTLDQFENEVLQSPRVSSAASGDFRTRKVAVVRFFADVTDFYDQLYILRDLSSSLKHVGT.

Mg(2+) is bound by residues Asp-656, Glu-660, Asn-839, Asp-840, Ser-843, and Asp-847. Positions 656 to 660 match the DEXXE motif motif; it reads DEFFE.

Belongs to the terpene synthase family. Mg(2+) serves as cofactor.

The enzyme catalyses ent-copalyl diphosphate = ent-kaur-16-ene + diphosphate. It catalyses the reaction (2E,6E,10E)-geranylgeranyl diphosphate = ent-copalyl diphosphate. The protein operates within plant hormone biosynthesis; gibberellin biosynthesis. In terms of biological role, catalyzes the conversion of geranylgeranyl diphosphate to the gibberellin precursor ent-kaurene diphosphate in a two step process. The chain is Ent-kaur-16-ene synthase from Phaeosphaeria sp. (strain L487).